A 1201-amino-acid polypeptide reads, in one-letter code: ATP-dependent helicase/deoxyribonuclease subunit B (1201 aa).

The protein belongs to the helicase family. AddB/RexB type 2 subfamily. Heterodimer of AddA and RexB. Mg(2+) is required as a cofactor.

In terms of biological role, the heterodimer acts as both an ATP-dependent DNA helicase and an ATP-dependent, dual-direction single-stranded exonuclease. Recognizes the chi site generating a DNA molecule suitable for the initiation of homologous recombination. This subunit has 5' -&gt; 3' nuclease activity but not helicase activity. This is ATP-dependent helicase/deoxyribonuclease subunit B from Levilactobacillus brevis (strain ATCC 367 / BCRC 12310 / CIP 105137 / JCM 1170 / LMG 11437 / NCIMB 947 / NCTC 947) (Lactobacillus brevis).